The following is a 143-amino-acid chain: Interferon gamma (143 aa).

Residue glutamine 1 is modified to Pyrrolidone carboxylic acid. 2 N-linked (GlcNAc...) asparagine glycosylation sites follow: asparagine 25 and asparagine 97.

This sequence belongs to the type II (or gamma) interferon family. As to quaternary structure, homodimer. Interacts with IFNGR1 (via extracellular domain); this interaction promotes IFNGR1 dimerization.

It is found in the secreted. Type II interferon produced by immune cells such as T-cells and NK cells that plays crucial roles in antimicrobial, antiviral, and antitumor responses by activating effector immune cells and enhancing antigen presentation. Primarily signals through the JAK-STAT pathway after interaction with its receptor IFNGR1 to affect gene regulation. Upon IFNG binding, IFNGR1 intracellular domain opens out to allow association of downstream signaling components JAK2, JAK1 and STAT1, leading to STAT1 activation, nuclear translocation and transcription of IFNG-regulated genes. Many of the induced genes are transcription factors such as IRF1 that are able to further drive regulation of a next wave of transcription. Plays a role in class I antigen presentation pathway by inducing a replacement of catalytic proteasome subunits with immunoproteasome subunits. In turn, increases the quantity, quality, and repertoire of peptides for class I MHC loading. Increases the efficiency of peptide generation also by inducing the expression of activator PA28 that associates with the proteasome and alters its proteolytic cleavage preference. Up-regulates as well MHC II complexes on the cell surface by promoting expression of several key molecules such as cathepsins B/CTSB, H/CTSH, and L/CTSL. Participates in the regulation of hematopoietic stem cells during development and under homeostatic conditions by affecting their development, quiescence, and differentiation. The chain is Interferon gamma (IFNG) from Pan troglodytes (Chimpanzee).